The chain runs to 436 residues: 3-phosphoshikimate 1-carboxyvinyltransferase (436 aa).

3-phosphoshikimate is bound by residues K22, S23, and R27. Phosphoenolpyruvate is bound at residue K22. Phosphoenolpyruvate contacts are provided by G95 and R123. 6 residues coordinate 3-phosphoshikimate: S170, S171, Q172, S201, D322, and K349. Q172 provides a ligand contact to phosphoenolpyruvate. Residue D322 is the Proton acceptor of the active site. Residues R353, R397, and K422 each contribute to the phosphoenolpyruvate site.

Belongs to the EPSP synthase family. Monomer.

It localises to the cytoplasm. The enzyme catalyses 3-phosphoshikimate + phosphoenolpyruvate = 5-O-(1-carboxyvinyl)-3-phosphoshikimate + phosphate. It functions in the pathway metabolic intermediate biosynthesis; chorismate biosynthesis; chorismate from D-erythrose 4-phosphate and phosphoenolpyruvate: step 6/7. Catalyzes the transfer of the enolpyruvyl moiety of phosphoenolpyruvate (PEP) to the 5-hydroxyl of shikimate-3-phosphate (S3P) to produce enolpyruvyl shikimate-3-phosphate and inorganic phosphate. The chain is 3-phosphoshikimate 1-carboxyvinyltransferase from Ralstonia nicotianae (strain ATCC BAA-1114 / GMI1000) (Ralstonia solanacearum).